Consider the following 552-residue polypeptide: MSAQNGYEWQQTERDVWTRTCLGHEAAASFNENIAYGHTELSVTATFRVHHPASSGIAGTDQEQEDLVARVRDAWIRTRYLRPEVAVEMTTHTDASIPQAFTYRVLRDEVSLRRWVDQTMAVVRLGEPGAESLEEVCAYTYNRALPTPGKQSMLYLVLPRLADEKDRNAHFVWNVSHALADGGSISELYNVLLQAMIDASPSTDGSVYIPSDQELDVLPLLPRSVVAAYRQQHKPSAADEEAAAETARDNLRLIQAKMNESLALQPVTNWTTRKHETICIRRDIEADEARELIKFGKHIKSGVTYLASAATVLATAETFPERKASSTGALMGMVRNARRWLSTEPVEGATGNRTPLGSDAVFLWIPVDTQKSLEPSFDGVPELVSVAARIRSELNKHLVSPHCISSYPVVAEFAQGALTNHWAEIEGANRSAHTPNAEELSKIIGPQAPGFSSVGALQVHSRFEPASPSARASGLWLERTDSAHRGRQVNASPWISMLMIDGKIKLQLGFDAKFHDADKMEQWMQRTYEWLLVCAAAASSSVGTVAPISARL.

This sequence belongs to the trichothecene O-acetyltransferase family.

It participates in secondary metabolite biosynthesis. Functionally, acyl-CoA-dependent acyltransferase; part of the gene cluster that mediates the biosynthesis of mannosylerythritol lipids (MELs), surface-active substances that enhance the availability of water-insoluble substrates. Depending on the number of acetyl groups, mannosylerythritol lipids can be differentiated into MEL A (fully acetylated), MEL B and MEL C (monoacetylated at R-6 and R-4, respectively), and the fully deacetylated MEL D. The first step in the pathway is the generation of mannosylerythritol by the glycosyltransferase EMT1 which catalyzes the transfer of GDP-mannose to the C-4 atom of meso-erythritol. This reaction has to be stereospecific, since only mannosyl-D-erythritol is generated. The produced disaccharide is subsequently acylated with fatty acids of various lengths by the acyltransferases MAC1 and MAC2 at positions C-2 and C-3, repectively. The existence of MEL derivatives which carry an acetyl group at C-2 implies that at least MAC1 also accepts acetyl-CoA as a donor. The final step of MEL biosynthesis is the acetylation of the fully acylated mannosylerythritol lipids catalyzed by the acetyl-CoA-dependent acetyltransferase MAT1. MAT1 displays a relaxed regioselectivity and is able to transfer acetylgroups to both positions C-4 and C-6 of the mannosyl moiety. This chain is Acyl-CoA-dependent acyltransferase MAC1, found in Pseudozyma antarctica (strain T-34) (Yeast).